The chain runs to 322 residues: Cell division control protein 10 (322 aa).

Met1 carries the post-translational modification N-acetylmethionine. Positions Lys29 to Ala302 constitute a Septin-type G domain. Residues Gly39 to Ser46 are G1 motif. Residues Gly39 to Ser46, Thr74, Gly100, and Lys180 to Glu188 each bind GTP. The tract at residues Asp97–Gly100 is G3 motif. Residues Gly179 to Asp182 are G4 motif. The residue at position 216 (Thr216) is a Phosphothreonine. Positions 236 and 251 each coordinate GTP.

The protein belongs to the TRAFAC class TrmE-Era-EngA-EngB-Septin-like GTPase superfamily. Septin GTPase family. In terms of assembly, component of the septin complex which consists of CDC3, CDC10, CDC11, CDC12 and probably SHS1 and rearranges to a cortical collar of highly ordered filaments at the mother-bud-neck. A complex formed by CDC3, CDC10, CDC11 and CDC12 is capable of forming long filaments in vitro and the components seem to be present in a 2:2:2:2 arrangement in vivo. The filaments are proposed to be formed by the end-to-end polymerization of CDC3-CDC12-CDC11 complexes with CDC10 serving as a bridge to bundle the polymers into paired filaments. Component of the GIN4 complex composed of at least BNI5, CDC3, CDC10, CDC11, CDC12, GIN4, NAP1 and SHS1. Self-associates. Interacts with SYP1.

The protein localises to the membrane. It is found in the bud neck. In terms of biological role, septins are GTPases involved in cytokinesis that assemble early in the cell cycle as a patch at the incipient bud site and form a ring approximate 15 minutes before bud emergence, which transforms into an hour-glass shaped collar of cortical filaments that spans both sides of the mother-bud neck. This collar persists until just before cytokinesis, when it splits into two rings that occupy opposite sides of the neck. The septins at the bud neck serve as a structural scaffold that recruits different components involved in diverse processes at specific stages during the cell cycle. Many proteins bind asymmetrically to the septin collar. The septin assembly is regulated by protein kinases GIN4 and/or CLA4. May act by recruiting MYO1 and HOF1, a protein involved in septation, to the site of cleavage. Septins are also involved in cell morphogenesis, bud site selection, chitin deposition, cell cycle regulation, cell compartmentalization and spore wall formation. The sequence is that of Cell division control protein 10 (CDC10) from Saccharomyces cerevisiae (strain ATCC 204508 / S288c) (Baker's yeast).